A 672-amino-acid polypeptide reads, in one-letter code: Glycogen [starch] synthase (672 aa).

Lysine 56 is a UDP-alpha-D-glucose binding site. Residues 645-672 are disordered; sequence MRDNEGKVPSAATSRRPSIHSSDGEDDE. Residues 655 to 665 are compositionally biased toward polar residues; sequence AATSRRPSIHS.

It belongs to the glycosyltransferase 3 family. As to quaternary structure, forms a hetero-octamer with each protomer of the gsy-1 homotetramer bound to one molecule of gyg-1. The N-terminus is involved in interprotomer contacts with gyg-1. The interaction with gyg-1 is required for glycogen production but is not required for gsy-1 intrinsic activity.

The enzyme catalyses [(1-&gt;4)-alpha-D-glucosyl](n) + UDP-alpha-D-glucose = [(1-&gt;4)-alpha-D-glucosyl](n+1) + UDP + H(+). It participates in glycan biosynthesis; glycogen biosynthesis. Its function is as follows. Transfers the glycosyl residue from UDP-Glc to the non-reducing end of alpha-1,4-glucan. In Caenorhabditis elegans, this protein is Glycogen [starch] synthase.